The following is a 231-amino-acid chain: Ribonuclease HII (231 aa).

Residues 23 to 214 (GPVAGVDEAG…VAKAHREWAL (192 aa)) enclose the RNase H type-2 domain. A divalent metal cation is bound by residues Asp29, Glu30, and Asp123.

It belongs to the RNase HII family. It depends on Mn(2+) as a cofactor. Mg(2+) is required as a cofactor.

The protein resides in the cytoplasm. It catalyses the reaction Endonucleolytic cleavage to 5'-phosphomonoester.. Endonuclease that specifically degrades the RNA of RNA-DNA hybrids. In Corynebacterium efficiens (strain DSM 44549 / YS-314 / AJ 12310 / JCM 11189 / NBRC 100395), this protein is Ribonuclease HII.